The chain runs to 285 residues: Catechol-2,3-dioxygenase (285 aa).

2 VOC domains span residues 9-126 (HIGY…MYAD) and 169-285 (IIGH…TFVI). 2 residues coordinate Fe cation: histidine 213 and glutamate 264.

This sequence belongs to the extradiol ring-cleavage dioxygenase family. The cofactor is Fe(2+).

The enzyme catalyses catechol + O2 = (2Z,4E)-2-hydroxy-6-oxohexa-2,4-dienoate + H(+). In terms of biological role, involved in the meta cleavage of catechol to 2-hydroxymuconic semialdehyde. Essential for growth and viability in the presence of catechol and probably involved in the detoxification of catechol. This is Catechol-2,3-dioxygenase (catE) from Bacillus subtilis (strain 168).